The sequence spans 118 residues: MPNSIESRLRRARQTRAKIAELKVVRLAIHRSNSHIYAQLIDGSGSKVLASASTLEPELRKELPNGGTVTAAAVVGKRVAEKARGLGIETVAFDRSGFKYHGRVKALADAARENGLKF.

Belongs to the universal ribosomal protein uL18 family. In terms of assembly, part of the 50S ribosomal subunit; part of the 5S rRNA/L5/L18/L25 subcomplex. Contacts the 5S and 23S rRNAs.

Functionally, this is one of the proteins that bind and probably mediate the attachment of the 5S RNA into the large ribosomal subunit, where it forms part of the central protuberance. This is Large ribosomal subunit protein uL18 from Nitrosospira multiformis (strain ATCC 25196 / NCIMB 11849 / C 71).